Reading from the N-terminus, the 1507-residue chain is Chromatin-remodeling ATPase INO80 (1507 aa).

2 disordered regions span residues 30–82 and 428–452; these read PEDE…DAED and RKKQ…KRQQ. The segment covering 38 to 67 has biased composition (polar residues); the sequence is GSSSQDESRSTQGGVVANYSNGSKSRMNAS. Positions 350 to 475 constitute a DBINO domain; it reads AWINIVRRDI…SHFMQNKTDS (126 aa). Basic and acidic residues predominate over residues 428–450; sequence RKKQEKEAAEAFKREQEQRESKR. A Helicase ATP-binding domain is found at 598-769; sequence VNCYEQGLNG…WALLHFIMPM (172 aa). Position 611–618 (611–618) interacts with ATP; that stretch reads DEMGLGKT. In terms of domain architecture, Helicase C-terminal spans 1210 to 1360; that stretch reads TLDILLKRLR…QLVMTGGHVQ (151 aa). Residues 1415–1507 form a disordered region; sequence LEELEDVDRQ…KGFDPSSSAN (93 aa). Residues 1491–1507 show a composition bias toward polar residues; the sequence is ASVTESNKGFDPSSSAN.

This sequence belongs to the SNF2/RAD54 helicase family. As to quaternary structure, component of the INO80 chromatin-remodeling complex. Associates with REF6/EIN6.

The protein localises to the nucleus. The catalysed reaction is ATP + H2O = ADP + phosphate + H(+). Functionally, ATPase component of the chromatin remodeling INO80 complex which is involved in transcriptional regulation, DNA replication and DNA repair. Binds DNA. As part of the INO80 complex, remodels chromatin by shifting nucleosomes. The INO80 complex controls ethylene-induced H2A.Z eviction dynamics. Positive regulator of homologous recombination, but not an essential component of homologous recombination. Not involved in the illegitimate repair pathway. The chain is Chromatin-remodeling ATPase INO80 from Arabidopsis thaliana (Mouse-ear cress).